The following is a 2302-amino-acid chain: Phosphatidylinositol phosphatase PTPRQ (2302 aa).

A signal peptide spans 1 to 18; that stretch reads MMDFHFSFLFLLIGTSES. The Extracellular portion of the chain corresponds to 19 to 1908; sequence QVDVSSSFDG…GEGLSERTVE (1890 aa). N-linked (GlcNAc...) asparagine glycosylation is present at asparagine 54. Fibronectin type-III domains follow at residues 60-155, 159-254, 310-398, 401-501, 474-566, 570-665, 670-759, 764-854, 859-948, 953-1053, 1058-1151, 1156-1243, 1248-1341, 1345-1431, 1435-1539, 1544-1642, and 1647-1748; these read PPVF…TAES, KVVN…SSST, PPQN…PPDV, AVFD…PHND, GFYE…TVRT, VPSS…TPED, SPQD…TSET, APEN…TEED, PPQN…TPEG, PPND…TDQD, PVGN…TEED, PPII…TDES, PPQN…TQES, AVRN…LPET, APTN…TLPG, PPEN…TLES, and PPNN…IKAP. N-linked (GlcNAc...) asparagine glycosylation is found at asparagine 162, asparagine 169, asparagine 318, asparagine 354, and asparagine 389. N-linked (GlcNAc...) asparagine glycosylation is found at asparagine 733 and asparagine 746. N-linked (GlcNAc...) asparagine glycosylation is found at asparagine 904, asparagine 998, asparagine 1010, and asparagine 1040. Residues asparagine 1251 and asparagine 1256 are each glycosylated (N-linked (GlcNAc...) asparagine). An N-linked (GlcNAc...) asparagine glycan is attached at asparagine 1805. The chain crosses the membrane as a helical span at residues 1909–1929; the sequence is IILSVTLCILSIILLGTAIFA. The Cytoplasmic segment spans residues 1930-2302; sequence FVRIRQKQKE…VELEWEETTM (373 aa). In terms of domain architecture, Tyrosine-protein phosphatase spans 2006–2262; it reads FQEEFSELPK…IFLHQCILDL (257 aa). The active-site Phosphocysteine intermediate is the cysteine 2203.

This sequence belongs to the protein-tyrosine phosphatase family. Receptor class 2A subfamily. In terms of assembly, interacts with TPRN. TPRN, CLIC5 and PTPQR form concentric rings at the base of stereocilia and may form a complex.

It localises to the cell projection. It is found in the stereocilium. The protein localises to the apical cell membrane. The protein resides in the basal cell membrane. It carries out the reaction a 1,2-diacyl-sn-glycero-3-phospho-(1D-myo-inositol-3,4,5-trisphosphate) + H2O = a 1,2-diacyl-sn-glycero-3-phospho-(1D-myo-inositol-4,5-bisphosphate) + phosphate. It catalyses the reaction a 1,2-diacyl-sn-glycero-3-phospho-(1D-myo-inositol-3,4,5-trisphosphate) + H2O = a 1,2-diacyl-sn-glycero-3-phospho-(1D-myo-inositol-3,4-bisphosphate) + phosphate. The catalysed reaction is a 1,2-diacyl-sn-glycero-3-phospho-(1D-myo-inositol-3,5-bisphosphate) + H2O = a 1,2-diacyl-sn-glycero-3-phospho-(1D-myo-inositol-5-phosphate) + phosphate. The enzyme catalyses a 1,2-diacyl-sn-glycero-3-phospho-(1D-myo-inositol-3,5-bisphosphate) + H2O = a 1,2-diacyl-sn-glycero-3-phospho-(1D-myo-inositol-3-phosphate) + phosphate. It carries out the reaction a 1,2-diacyl-sn-glycero-3-phospho-(1D-myo-inositol-4,5-bisphosphate) + H2O = a 1,2-diacyl-sn-glycero-3-phospho-(1D-myo-inositol 4-phosphate) + phosphate. Functionally, dephosphorylates phosphatidylinositol phosphates, such as phosphatidylinositol 3,4,5-trisphosphate (PIP3) and phosphatidylinositol 3,5-diphosphates, with preference for PIP3. Phosphate can be hydrolyzed from the D3 and D5 positions in the inositol ring. Has low tyrosine-protein phosphatase activity in vitro; however, the relevance of such activity in vivo is unclear. Plays an important role in adipogenesis of mesenchymal stem cells (MSCs). Regulates the phosphorylation state of AKT1 by regulating the levels of PIP3 level in MSCs and preadipocyte cells. Required for hair bundle maturation, a process that enables hair cells to detect and transmit sound and balance signals effectively, therefore affecting auditory function. May act by regulating the level of phosphatidylinositol 4,5-bisphosphate (PIP2) level in the basal region of hair bundles. This is Phosphatidylinositol phosphatase PTPRQ (Ptprq) from Rattus norvegicus (Rat).